Reading from the N-terminus, the 1441-residue chain is Remodeling and spacing factor 1 (1441 aa).

The DDT domain maps to 17–84; the sequence is PGSCPNFAVV…MRKIGKSVTA (68 aa). Glycyl lysine isopeptide (Lys-Gly) (interchain with G-Cter in SUMO2) cross-links involve residues Lys136 and Lys215. The span at 215–227 shows a compositional bias: polar residues; it reads KNSSQQDNSSRES. A disordered region spans residues 215–283; that stretch reads KNSSQQDNSS…TTVKKEKEDE (69 aa). Phosphoserine is present on Ser227. Basic and acidic residues-rich tracts occupy residues 234–257 and 274–283; these read ETKK…KSEE and TTVKKEKEDE. Glycyl lysine isopeptide (Lys-Gly) (interchain with G-Cter in SUMO2) cross-links involve residues Lys236, Lys243, Lys248, Lys252, and Lys254. Lys277 is covalently cross-linked (Glycyl lysine isopeptide (Lys-Gly) (interchain with G-Cter in SUMO1); alternate). Residue Lys277 forms a Glycyl lysine isopeptide (Lys-Gly) (interchain with G-Cter in SUMO2); alternate linkage. Glycyl lysine isopeptide (Lys-Gly) (interchain with G-Cter in SUMO2) cross-links involve residues Lys284, Lys288, Lys294, Lys305, Lys306, Lys309, Lys323, Lys327, Lys337, Lys342, Lys358, Lys373, Lys381, and Lys390. The span at 330–340 shows a compositional bias: basic and acidic residues; it reads RADPKDTKSSM. Residues 330-385 form a disordered region; sequence RADPKDTKSSMEKPVAQEPERIEFGGNIKSSHEITEKSTEETEKLKNDQQAKIPLK. Basic and acidic residues predominate over residues 359–378; the sequence is SSHEITEKSTEETEKLKNDQ. A phosphoserine mark is found at Ser392 and Ser397. Residues Lys400, Lys405, Lys415, and Lys419 each participate in a glycyl lysine isopeptide (Lys-Gly) (interchain with G-Cter in SUMO2) cross-link. Position 429 is a phosphoserine (Ser429). Lys439 participates in a covalent cross-link: Glycyl lysine isopeptide (Lys-Gly) (interchain with G-Cter in SUMO2). Residue Lys456 forms a Glycyl lysine isopeptide (Lys-Gly) (interchain with G-Cter in SUMO1); alternate linkage. A Glycyl lysine isopeptide (Lys-Gly) (interchain with G-Cter in SUMO2); alternate cross-link involves residue Lys456. Residues Lys463 and Lys468 each participate in a glycyl lysine isopeptide (Lys-Gly) (interchain with G-Cter in SUMO2) cross-link. The span at 467 to 480 shows a compositional bias: basic and acidic residues; it reads TKEESYSPSKDRNI. The interval 467 to 634 is disordered; the sequence is TKEESYSPSK…AAETSPPSNI (168 aa). Residue Ser473 is modified to Phosphoserine. Positions 482-498 are enriched in polar residues; sequence TEGNGTESLNSVITSMK. Lys498 is covalently cross-linked (Glycyl lysine isopeptide (Lys-Gly) (interchain with G-Cter in SUMO2)). Residues 500-514 show a composition bias toward basic and acidic residues; it reads GELEKETAPLRKDAD. Ser524 is modified (phosphoserine). Residues 552 to 562 show a composition bias toward polar residues; that stretch reads SKTALSSTESC. Lys565 participates in a covalent cross-link: Glycyl lysine isopeptide (Lys-Gly) (interchain with G-Cter in SUMO2). The segment covering 565–601 has biased composition (basic and acidic residues); sequence KGEEKSPKTKKDKRPPILECLEKLEKSKKTFLDKDAQ. Phosphoserine occurs at positions 570 and 604. Basic and acidic residues predominate over residues 609–621; sequence EVPKSTLESEKPG. The residue at position 622 (Ser622) is a Phosphoserine. A Phosphothreonine modification is found at Thr628. Ser629 is subject to Phosphoserine. Glycyl lysine isopeptide (Lys-Gly) (interchain with G-Cter in SUMO2) cross-links involve residues Lys662, Lys663, Lys670, Lys677, Lys698, and Lys709. Residues 675–887 are disordered; that stretch reads FTKVEMDNLD…EEKESEEAIL (213 aa). A Phosphoserine modification is found at Ser748. Basic and acidic residues-rich tracts occupy residues 753 to 770, 789 to 802, and 816 to 831; these read LEPE…EKTN, AEIR…KRGE, and KTDK…KDTN. Residues Lys758, Lys768, Lys795, and Lys799 each participate in a glycyl lysine isopeptide (Lys-Gly) (interchain with G-Cter in SUMO2) cross-link. Residues 864-873 show a composition bias toward low complexity; the sequence is GSGSEKSSAA. A compositionally biased stretch (acidic residues) spans 874 to 887; that stretch reads SEEEEEKESEEAIL. Phosphoserine is present on Ser882. The PHD-type zinc finger occupies 891 to 941; it reads DEPCKKCGLPNHPELILLCDSCDSGYHTACLRPPLMIIPDGEWFCPPCQHK. Residues 942–1012 adopt a coiled-coil conformation; it reads LLCEKLEEQL…SKANLLERRS (71 aa). The disordered stretch occupies residues 983–1007; sequence PPQEPDFSEDQEEKKKDSKKSKANL. Lys1039 is covalently cross-linked (Glycyl lysine isopeptide (Lys-Gly) (interchain with G-Cter in SUMO2)). Lys1050 carries the N6-acetyllysine modification. The segment at 1063–1428 is disordered; sequence ISTILDEERK…EEEEDELLRV (366 aa). Acidic residues-rich tracts occupy residues 1094 to 1107 and 1120 to 1141; these read LDSD…ESED and VVSD…DSDT. 3 positions are modified to phosphoserine: Ser1096, Ser1098, and Ser1105. Positions 1146–1169 are enriched in basic residues; the sequence is RRLRRHPSRPMRQSRRLRRKTPKK. Positions 1189–1199 are enriched in acidic residues; sequence SDFSDDFSDDF. The segment covering 1203–1212 has biased composition (basic residues); it reads RRRRSRRNQK. Phosphoserine is present on residues Ser1221, Ser1223, and Ser1226. The segment covering 1229–1244 has biased composition (basic residues); that stretch reads SLRRGKEIRRVHKRRL. Residues Ser1258 and Ser1277 each carry the phosphoserine modification. Residue Thr1278 is modified to Phosphothreonine. Over residues 1280–1292 the composition is skewed to acidic residues; sequence EYSEADEEEEEEE. Phosphothreonine is present on Thr1305. Residues Ser1325 and Ser1336 each carry the phosphoserine modification. Over residues 1335-1344 the composition is skewed to basic and acidic residues; the sequence is ESTKKPYRIE. The residue at position 1339 (Lys1339) is an N6-acetyllysine. Phosphoserine occurs at positions 1345, 1359, and 1375. Residues 1394–1408 are compositionally biased toward polar residues; that stretch reads PKDNSTASASLASNG.

In terms of assembly, component of the RSF-1 ISWI chromatin-remodeling complex at least composed of SMARCA1 and RSF1. Within the RSF-1 ISWI chromatin-remodeling complex interacts with SMARCA1. Component of the RSF-5 ISWI chromatin-remodeling complex (also called the RSF complex) at least composed of SMARCA5/SNF2H and RSF1. Within the RSF-5 ISWI chromatin-remodeling complex interacts with SMARCA5/SNF2H; the interaction is direct. Identified in a centromere complex containing histones H2A, H2B and H4, and at least CENPA, CENPB, CENPC, CENPT, CENPN, HJURP, SUPT16H, SSRP1 and RSF1. Also binds the HBV pX/HBx protein, which is required to activate transcription of the viral genome. Phosphorylated. Ubiquitously expressed. Highly expressed in the heart, skeletal muscle, kidney and placenta. Expressed at low levels in the brain and colon.

The protein resides in the nucleus. Functionally, regulatory subunit of the ATP-dependent RSF-1 and RSF-5 ISWI chromatin-remodeling complexes, which form ordered nucleosome arrays on chromatin and facilitate access to DNA during DNA-templated processes such as DNA replication, transcription, and repair. Binds to core histones together with SMARCA5, and is required for the assembly of regular nucleosome arrays by the RSF-5 ISWI chromatin-remodeling complex. Directly stimulates the ATPase activity of SMARCA1 and SMARCA5 in the RSF-1 and RSF-5 ISWI chromatin-remodeling complexes, respectively. The RSF-1 ISWI chromatin remodeling complex has a lower ATP hydrolysis rate than the RSF-5 ISWI chromatin-remodeling complex. The complexes do not have the ability to slide mononucleosomes to the center of a DNA template. Facilitates transcription of hepatitis B virus (HBV) genes by the pX transcription activator. In case of infection by HBV, together with pX, it represses TNF-alpha induced NF-kappa-B transcription activation. Represses transcription when artificially recruited to chromatin by fusion to a heterogeneous DNA binding domain. The sequence is that of Remodeling and spacing factor 1 (RSF1) from Homo sapiens (Human).